Reading from the N-terminus, the 545-residue chain is Phenylalanine--tRNA ligase beta subunit (545 aa).

In terms of domain architecture, B5 spans 268 to 343 (FLHKIQNVRE…MSIGYNNLEP (76 aa)). Residues D321, D327, E330, and D331 each coordinate Mg(2+).

This sequence belongs to the phenylalanyl-tRNA synthetase beta subunit family. Type 2 subfamily. In terms of assembly, tetramer of two alpha and two beta subunits. The cofactor is Mg(2+).

The protein resides in the cytoplasm. It catalyses the reaction tRNA(Phe) + L-phenylalanine + ATP = L-phenylalanyl-tRNA(Phe) + AMP + diphosphate + H(+). This is Phenylalanine--tRNA ligase beta subunit from Saccharolobus islandicus (strain Y.N.15.51 / Yellowstone #2) (Sulfolobus islandicus).